A 671-amino-acid chain; its full sequence is DNA ligase (671 aa).

NAD(+) contacts are provided by residues 32 to 36 (DAEYD), 81 to 82 (SL), and Glu113. Lys115 (N6-AMP-lysine intermediate) is an active-site residue. Positions 136, 173, 290, and 314 each coordinate NAD(+). Residues Cys408, Cys411, Cys426, and Cys432 each contribute to the Zn(2+) site. The BRCT domain occupies 593–671 (EIDSPFAGKT…EAEMLRLLGS (79 aa)).

The protein belongs to the NAD-dependent DNA ligase family. LigA subfamily. Mg(2+) serves as cofactor. It depends on Mn(2+) as a cofactor.

It carries out the reaction NAD(+) + (deoxyribonucleotide)n-3'-hydroxyl + 5'-phospho-(deoxyribonucleotide)m = (deoxyribonucleotide)n+m + AMP + beta-nicotinamide D-nucleotide.. In terms of biological role, DNA ligase that catalyzes the formation of phosphodiester linkages between 5'-phosphoryl and 3'-hydroxyl groups in double-stranded DNA using NAD as a coenzyme and as the energy source for the reaction. It is essential for DNA replication and repair of damaged DNA. This is DNA ligase from Escherichia coli O157:H7.